The chain runs to 541 residues: Membrane protein insertase YidC (541 aa).

A helical membrane pass occupies residues 6 to 26 (SLLVLALIFISFLVYQQWQLD). A disordered region spans residues 34 to 56 (EQTTSITATSDVPASSPSNSQAI). 4 helical membrane passes run 337-357 (FWLL…IICV), 416-436 (LGGC…YWTF), 454-474 (LSAQ…MFLL), and 495-515 (PLVF…YWLV).

This sequence belongs to the OXA1/ALB3/YidC family. Type 1 subfamily. As to quaternary structure, interacts with the Sec translocase complex via SecD. Specifically interacts with transmembrane segments of nascent integral membrane proteins during membrane integration.

The protein localises to the cell inner membrane. In terms of biological role, required for the insertion and/or proper folding and/or complex formation of integral membrane proteins into the membrane. Involved in integration of membrane proteins that insert both dependently and independently of the Sec translocase complex, as well as at least some lipoproteins. Aids folding of multispanning membrane proteins. This Haemophilus influenzae (strain ATCC 51907 / DSM 11121 / KW20 / Rd) protein is Membrane protein insertase YidC.